A 719-amino-acid polypeptide reads, in one-letter code: Solute carrier family 15 member 2 (719 aa).

The Cytoplasmic portion of the chain corresponds to 1–43 (MGKMKDKDVDAEKYEKAQRSPKLCGTNYPVSIAFIVVNEFCER). Residues 44-61 (FSYYGMKAVLTLYFMNYL) form a helical membrane-spanning segment. The Extracellular segment spans residues 62-69 (HWDKNLST). N66 carries an N-linked (GlcNAc...) asparagine glycan. The helical transmembrane segment at 70-90 (AIYHAFSGLCYFTPLLGALIA) threads the bilayer. Residues 91-99 (DSWLGKFKT) lie on the Cytoplasmic side of the membrane. The helical transmembrane segment at 100 to 120 (IIYLSIVYVIGHVVKSVGAIP) threads the bilayer. Topologically, residues 121–125 (DVGDS) are extracellular. Residues 126-146 (TVHIALSMVGLGLIALGTGGI) traverse the membrane as a helical segment. The Cytoplasmic portion of the chain corresponds to 147-169 (KPCVAAFGGDQFDEDNIDERRKF). A helical membrane pass occupies residues 170–190 (FSIFYMSINAGSVLSTIITPI). The Extracellular segment spans residues 191 to 201 (LRGDVQCFGGD). A helical membrane pass occupies residues 202-222 (CYALAFGVPAALMVIALVVFI). The Cytoplasmic portion of the chain corresponds to 223–280 (SGSGLYKKSPPEGNVLVRVCKCIGFAISNRWTNSKKSPKRSHWLDWAEEKYSKRLIQE). The chain crosses the membrane as a helical span at residues 281–301 (IKMVCRVLVLYIPLPMFWALF). At 302 to 334 (DQQGSRWTLQATRMNMDFGGGFIIKPDQMQMLN) the chain is on the extracellular side. Residues 335–355 (ALLILVFIPIFDMGIYPLVGL) traverse the membrane as a helical segment. Topologically, residues 356–367 (CRIKLTPLKKMA) are cytoplasmic. Residues 368–388 (TGMILAALAFCAATAVEVYVI) traverse the membrane as a helical segment. Residues 389–594 (KTVVEPPPAK…QANNIHIGWQ (206 aa)) lie on the Extracellular side of the membrane. The segment at 389 to 594 (KTVVEPPPAK…QANNIHIGWQ (206 aa)) is extracellular domain (ECD). 3 N-linked (GlcNAc...) asparagine glycosylation sites follow: N481, N513, and N532. The helical transmembrane segment at 595–615 (IPQYVFLTAGEVMFSITGLEF) threads the bilayer. Over 616-626 (SYSQAPASMKS) the chain is Cytoplasmic. Residues 627-647 (VLQAGWLMTVAFGNVIVLIVA) form a helical membrane-spanning segment. Over 648-657 (EGAGMEQWVE) the chain is Extracellular. The chain crosses the membrane as a helical span at residues 658 to 678 (FLLFAALLVAVSIIFSIMAYF). At 679 to 719 (YTYVDPDQLDKLFKEDGDGGKVESSKKDELSLGDMPKQTKM) the chain is on the cytoplasmic side. A compositionally biased stretch (basic and acidic residues) spans 695–708 (GDGGKVESSKKDEL). Residues 695-719 (GDGGKVESSKKDELSLGDMPKQTKM) are disordered.

It belongs to the major facilitator superfamily. Proton-dependent oligopeptide transporter (POT/PTR) (TC 2.A.17) family. In terms of tissue distribution, expressed in kidney, brain and gut. Also expressed weakly in eye, gill and skeletal muscle.

Its subcellular location is the apical cell membrane. It localises to the cytoplasmic vesicle. The protein localises to the phagosome membrane. It is found in the cell membrane. It catalyses the reaction a dipeptide(out) + 2 H(+)(out) = a dipeptide(in) + 2 H(+)(in). The catalysed reaction is N-acetyl-D-muramoyl-L-alanyl-D-isoglutamine(out) + 3 H(+)(out) = N-acetyl-D-muramoyl-L-alanyl-D-isoglutamine(in) + 3 H(+)(in). The enzyme catalyses glycyl-L-leucine(out) + 2 H(+)(out) = glycyl-L-leucine(in) + 2 H(+)(in). It carries out the reaction glycyl-L-lysine(out) + 2 H(+)(out) = glycyl-L-lysine(in) + 2 H(+)(in). It catalyses the reaction glycyl-L-glutamate(out) + 3 H(+)(out) = glycyl-L-glutamate(in) + 3 H(+)(in). The catalysed reaction is L-alanyl-L-alanine(out) + 2 H(+)(out) = L-alanyl-L-alanine(in) + 2 H(+)(in). The enzyme catalyses an L-amino acid tripeptide(out) + 2 H(+)(out) = an L-amino acid tripeptide(in) + 2 H(+)(in). It carries out the reaction carnosine(out) + 2 H(+)(out) = carnosine(in) + 2 H(+)(in). Its function is as follows. Proton-coupled amino-acid transporter that transports oligopeptides of 2 to 4 amino acids with a preference for dipeptides. Transports neutral and anionic dipeptides with a proton to peptide stoichiometry of 2:1 or 3:1. The chain is Solute carrier family 15 member 2 from Danio rerio (Zebrafish).